The chain runs to 252 residues: Fatty acid elongase 4 (252 aa).

A helical transmembrane segment spans residues 25 to 45 (LVSWHALVLGHLLYLFVVFVM). A glycan (N-linked (GlcNAc...) asparagine) is linked at Asn-56. Residues 60-80 (VLVVYNVLQICLSAAMAINLS) traverse the membrane as a helical segment. N-linked (GlcNAc...) asparagine glycosylation occurs at Asn-89. A run of 5 helical transmembrane segments spans residues 100–120 (FWMF…VFIL), 127–147 (QLSF…GILL), 150–170 (GLAN…HFLM), 187–207 (FLLT…AILV), and 214–234 (FTLG…VLFL). Positions 132–136 (HVYHH) match the HxxHH motif motif. The Nucleophile role is filled by His-135.

The protein belongs to the ELO family.

The protein resides in the membrane. It catalyses the reaction (5Z,8Z,11Z,14Z)-eicosatetraenoyl-CoA + malonyl-CoA + H(+) = (7Z,10Z,13Z,16Z)-3-oxodocosatetraenoyl-CoA + CO2 + CoA. Its pathway is lipid metabolism; fatty acid biosynthesis. Its function is as follows. Involved in the synthesis of fatty acids. Elongates arachidonate and other C20 polyunsaturated fatty acids (PUFAs) with a preference for n-6 PUFAs. Not involved in fatty acid synthesis up to C18. This chain is Fatty acid elongase 4, found in Trypanosoma brucei brucei (strain 927/4 GUTat10.1).